A 500-amino-acid polypeptide reads, in one-letter code: tRNA (guanine(37)-N(1))-methyltransferase (500 aa).

Residues His-215, 253 to 254, 281 to 282, and Asn-312 contribute to the S-adenosyl-L-methionine site; these read DL and DA. The interval 463-500 is disordered; the sequence is QIVAKKTPKPAPRPLPAKNKTTPDTNKMETDLTKLEMK. A compositionally biased stretch (basic and acidic residues) spans 488 to 500; it reads NKMETDLTKLEMK.

This sequence belongs to the class I-like SAM-binding methyltransferase superfamily. TRM5/TYW2 family. As to quaternary structure, monomer.

The protein resides in the mitochondrion matrix. Its subcellular location is the nucleus. It is found in the cytoplasm. The catalysed reaction is guanosine(37) in tRNA + S-adenosyl-L-methionine = N(1)-methylguanosine(37) in tRNA + S-adenosyl-L-homocysteine + H(+). In terms of biological role, specifically methylates the N1 position of guanosine-37 in various cytoplasmic and mitochondrial tRNAs. Methylation is not dependent on the nature of the nucleoside 5' of the target nucleoside. This is the first step in the biosynthesis of wybutosine (yW), a modified base adjacent to the anticodon of tRNAs and required for accurate decoding. This is tRNA (guanine(37)-N(1))-methyltransferase from Anopheles darlingi (Mosquito).